We begin with the raw amino-acid sequence, 400 residues long: S-adenosylmethionine synthase (400 aa).

Residue His-17 coordinates ATP. Asp-19 contributes to the Mg(2+) binding site. A K(+)-binding site is contributed by Glu-45. L-methionine-binding residues include Glu-58 and Gln-101. Residues 101–111 (QSADIAMGVDQ) form a flexible loop region. ATP is bound by residues 177–179 (DGK), 244–245 (RF), Asp-253, 259–260 (RK), Ala-276, and Lys-280. Asp-253 is a binding site for L-methionine. Lys-284 lines the L-methionine pocket.

This sequence belongs to the AdoMet synthase family. In terms of assembly, homotetramer; dimer of dimers. Mg(2+) is required as a cofactor. The cofactor is K(+).

The protein localises to the cytoplasm. The enzyme catalyses L-methionine + ATP + H2O = S-adenosyl-L-methionine + phosphate + diphosphate. It participates in amino-acid biosynthesis; S-adenosyl-L-methionine biosynthesis; S-adenosyl-L-methionine from L-methionine: step 1/1. Functionally, catalyzes the formation of S-adenosylmethionine (AdoMet) from methionine and ATP. The overall synthetic reaction is composed of two sequential steps, AdoMet formation and the subsequent tripolyphosphate hydrolysis which occurs prior to release of AdoMet from the enzyme. The polypeptide is S-adenosylmethionine synthase (Bacillus velezensis (strain DSM 23117 / BGSC 10A6 / LMG 26770 / FZB42) (Bacillus amyloliquefaciens subsp. plantarum)).